Here is a 252-residue protein sequence, read N- to C-terminus: 5-oxoprolinase subunit A (252 aa).

Belongs to the LamB/PxpA family. As to quaternary structure, forms a complex composed of PxpA, PxpB and PxpC.

The catalysed reaction is 5-oxo-L-proline + ATP + 2 H2O = L-glutamate + ADP + phosphate + H(+). In terms of biological role, catalyzes the cleavage of 5-oxoproline to form L-glutamate coupled to the hydrolysis of ATP to ADP and inorganic phosphate. This chain is 5-oxoprolinase subunit A, found in Bordetella pertussis (strain Tohama I / ATCC BAA-589 / NCTC 13251).